The chain runs to 157 residues: SsrA-binding protein (157 aa).

It belongs to the SmpB family.

The protein localises to the cytoplasm. Functionally, required for rescue of stalled ribosomes mediated by trans-translation. Binds to transfer-messenger RNA (tmRNA), required for stable association of tmRNA with ribosomes. tmRNA and SmpB together mimic tRNA shape, replacing the anticodon stem-loop with SmpB. tmRNA is encoded by the ssrA gene; the 2 termini fold to resemble tRNA(Ala) and it encodes a 'tag peptide', a short internal open reading frame. During trans-translation Ala-aminoacylated tmRNA acts like a tRNA, entering the A-site of stalled ribosomes, displacing the stalled mRNA. The ribosome then switches to translate the ORF on the tmRNA; the nascent peptide is terminated with the 'tag peptide' encoded by the tmRNA and targeted for degradation. The ribosome is freed to recommence translation, which seems to be the essential function of trans-translation. This is SsrA-binding protein from Chlorobium luteolum (strain DSM 273 / BCRC 81028 / 2530) (Pelodictyon luteolum).